A 516-amino-acid chain; its full sequence is Chromosomal replication initiator protein DnaA (516 aa).

Residues 1–72 (MSLEHWNLCL…LLSEFAGDDL (72 aa)) are domain I, interacts with DnaA modulators. The interval 72-179 (LAPALKLAVK…QVEGGINHGA (108 aa)) is domain II. The tract at residues 180–396 (NLNNSFTFDN…GALKRVIANS (217 aa)) is domain III, AAA+ region. 4 residues coordinate ATP: G224, G226, K227, and T228. Residues 397 to 516 (HFTGRAITPD…YKQLMRILTT (120 aa)) are domain IV, binds dsDNA.

This sequence belongs to the DnaA family. As to quaternary structure, oligomerizes as a right-handed, spiral filament on DNA at oriC.

It is found in the cytoplasm. In terms of biological role, plays an essential role in the initiation and regulation of chromosomal replication. ATP-DnaA binds to the origin of replication (oriC) to initiate formation of the DNA replication initiation complex once per cell cycle. Binds the DnaA box (a 9 base pair repeat at the origin) and separates the double-stranded (ds)DNA. Forms a right-handed helical filament on oriC DNA; dsDNA binds to the exterior of the filament while single-stranded (ss)DNA is stabiized in the filament's interior. The ATP-DnaA-oriC complex binds and stabilizes one strand of the AT-rich DNA unwinding element (DUE), permitting loading of DNA polymerase. After initiation quickly degrades to an ADP-DnaA complex that is not apt for DNA replication. Binds acidic phospholipids. This Marinomonas sp. (strain MWYL1) protein is Chromosomal replication initiator protein DnaA.